The chain runs to 621 residues: Zinc metalloproteinase-disintegrin-like NaMP (621 aa).

Residues 1–20 form the signal peptide; that stretch reads MIQPLLVAICLVVFPYQGSS. A propeptide spanning residues 21 to 188 is cleaved from the precursor; it reads TILESGKVRD…GESDETIKKI (168 aa). Residues 206 to 402 enclose the Peptidase M12B domain; that stretch reads KHIELYMVAD…KSAQCILNDP (197 aa). Asparagine 225, asparagine 268, and asparagine 319 each carry an N-linked (GlcNAc...) asparagine glycan. 17 cysteine pairs are disulfide-bonded: cysteine 317–cysteine 397, cysteine 357–cysteine 381, cysteine 359–cysteine 364, cysteine 413–cysteine 442, cysteine 424–cysteine 437, cysteine 426–cysteine 432, cysteine 436–cysteine 459, cysteine 450–cysteine 456, cysteine 455–cysteine 481, cysteine 468–cysteine 488, cysteine 475–cysteine 507, cysteine 500–cysteine 512, cysteine 519–cysteine 569, cysteine 534–cysteine 579, cysteine 547–cysteine 557, cysteine 564–cysteine 605, and cysteine 599–cysteine 610. Histidine 342 contributes to the Zn(2+) binding site. Glutamate 343 is a catalytic residue. Residues histidine 346 and histidine 352 each contribute to the Zn(2+) site. In terms of domain architecture, Disintegrin spans 410 to 496; it reads TAICGNGFVE…ECPMNHFHMN (87 aa). Positions 474-476 match the D/ECD-tripeptide motif; it reads DCD. The N-linked (GlcNAc...) asparagine glycan is linked to asparagine 551.

This sequence belongs to the venom metalloproteinase (M12B) family. P-III subfamily. P-IIIa sub-subfamily. Monomer. The cofactor is Zn(2+). As to expression, expressed by the venom gland.

Its subcellular location is the secreted. In terms of biological role, snake venom zinc metalloproteinase that inhibits platelet aggregation and degrades fibrinogen. The protein is Zinc metalloproteinase-disintegrin-like NaMP of Naja atra (Chinese cobra).